The primary structure comprises 338 residues: Ribosomal RNA small subunit methyltransferase H (338 aa).

Residues 53-55 (GGH), Asp-72, Tyr-99, Asp-123, and Gln-130 each bind S-adenosyl-L-methionine. Disordered stretches follow at residues 276-297 (EITP…PGMG) and 304-323 (TRGA…RSAP).

Belongs to the methyltransferase superfamily. RsmH family.

It localises to the cytoplasm. The catalysed reaction is cytidine(1402) in 16S rRNA + S-adenosyl-L-methionine = N(4)-methylcytidine(1402) in 16S rRNA + S-adenosyl-L-homocysteine + H(+). Specifically methylates the N4 position of cytidine in position 1402 (C1402) of 16S rRNA. The polypeptide is Ribosomal RNA small subunit methyltransferase H (Rhodococcus jostii (strain RHA1)).